The primary structure comprises 315 residues: Ribosomal RNA small subunit methyltransferase H (315 aa).

S-adenosyl-L-methionine-binding positions include Gly-42–His-44, Asp-59, Phe-96, Asp-108, and Gln-115.

The protein belongs to the methyltransferase superfamily. RsmH family.

It localises to the cytoplasm. It catalyses the reaction cytidine(1402) in 16S rRNA + S-adenosyl-L-methionine = N(4)-methylcytidine(1402) in 16S rRNA + S-adenosyl-L-homocysteine + H(+). Its function is as follows. Specifically methylates the N4 position of cytidine in position 1402 (C1402) of 16S rRNA. This chain is Ribosomal RNA small subunit methyltransferase H, found in Gemmatimonas aurantiaca (strain DSM 14586 / JCM 11422 / NBRC 100505 / T-27).